The sequence spans 207 residues: Dephospho-CoA kinase (207 aa).

The 198-residue stretch at 10–207 folds into the DPCK domain; sequence TLGLTGGIGS…FYLTLRGGQS (198 aa). 18-23 serves as a coordination point for ATP; it reads GSGKSA.

It belongs to the CoaE family.

The protein localises to the cytoplasm. The enzyme catalyses 3'-dephospho-CoA + ATP = ADP + CoA + H(+). Its pathway is cofactor biosynthesis; coenzyme A biosynthesis; CoA from (R)-pantothenate: step 5/5. In terms of biological role, catalyzes the phosphorylation of the 3'-hydroxyl group of dephosphocoenzyme A to form coenzyme A. The protein is Dephospho-CoA kinase of Pseudomonas fluorescens (strain ATCC BAA-477 / NRRL B-23932 / Pf-5).